The sequence spans 372 residues: Alginate lyase (372 aa).

An N-terminal signal peptide occupies residues 1 to 22; it reads MKTRLALPCLLGSLLLSSAVHA. Substrate-binding positions include 61–62, 134–135, and tyrosine 252; these read SK and HT.

This sequence belongs to the polysaccharide lyase 5 family.

The protein resides in the periplasm. It catalyses the reaction Eliminative cleavage of alginate to give oligosaccharides with 4-deoxy-alpha-L-erythro-hex-4-enuronosyl groups at their non-reducing ends and beta-D-mannuronate at their reducing end.. Monovalent cations such as potassium and sodium enhance activity, as well as a combined action of these cations with magnesium. However, other cations like calcium, cobalt, manganese and zinc, or the presence of EDTA, do not affect the enzymatic activity. In terms of biological role, catalyzes the depolymerization of alginate by cleaving the beta-1,4 glycosidic bond between two adjacent sugar residues via a beta-elimination mechanism. Degrades deacetylated polymannuronate alginate more efficiently than non-deacetylated polyM. Is able to degrade its own alginate, but at a lower efficiency than that produced from M.pyriferia and P.aeruginosa. May serve to degrade mislocalized alginate that is trapped in the periplasmic space. This is Alginate lyase from Azotobacter chroococcum mcd 1.